A 479-amino-acid chain; its full sequence is Dihydrolipoyl dehydrogenase, mitochondrial (479 aa).

A mitochondrion-targeting transit peptide spans 1–19; sequence FNRXSPGLQGVSSVPLRTY. An N6-acetyllysine; alternate modification is found at K50. An N6-succinyllysine; alternate modification is found at K50. Residues 55–64 and K73 each bind FAD; that span reads EKNETLGGTC. A disulfide bridge connects residues C64 and C69. Residues K88, K106, K116, and K127 each carry the N6-acetyllysine; alternate modification. Residues K88, K106, K116, and K127 each carry the N6-succinyllysine; alternate modification. G138 provides a ligand contact to FAD. N6-succinyllysine is present on residues K143 and K150. 167–169 is a binding site for FAD; sequence TGS. Residues 204-211 and E227 each bind NAD(+); that span reads GAGVIGVE. N6-succinyllysine is present on residues K257 and K261. V262 provides a ligand contact to NAD(+). S269 is modified (phosphoserine). Residue G298 coordinates NAD(+). K330 is subject to N6-acetyllysine. FAD contacts are provided by residues D339 and 345-348; that span reads MLAH. N6-acetyllysine; alternate is present on K394. Residue K394 is modified to N6-succinyllysine; alternate. N6-acetyllysine is present on residues K401 and K404. The residue at position 414 (K414) is an N6-succinyllysine. The Proton acceptor role is filled by H471.

Belongs to the class-I pyridine nucleotide-disulfide oxidoreductase family. As to quaternary structure, homodimer. Part of the multimeric pyruvate dehydrogenase complex that contains multiple copies of pyruvate dehydrogenase (subunits PDHA (PDHA1 or PDHA2) and PDHB, E1), dihydrolipoamide acetyltransferase (DLAT, E2) and lipoamide dehydrogenase (DLD, E3). These subunits are bound to an inner core composed of about 48 DLAT and 12 PDHX molecules (by non covalent bonds). The 2-oxoglutarate dehydrogenase complex is composed of OGDH (2-oxoglutarate dehydrogenase; E1), DLST (dihydrolipoamide succinyltransferase; E2) and DLD (dihydrolipoamide dehydrogenase; E3). It contains multiple copies of the three enzymatic components (E1, E2 and E3). In the nucleus, the 2-oxoglutarate dehydrogenase complex associates with KAT2A. Interacts with PDHX. Requires FAD as cofactor. In terms of processing, tyrosine phosphorylated. As to expression, expressed in testis (at protein level).

The protein resides in the mitochondrion matrix. Its subcellular location is the nucleus. It localises to the cell projection. The protein localises to the cilium. It is found in the flagellum. The protein resides in the cytoplasmic vesicle. Its subcellular location is the secretory vesicle. It localises to the acrosome. It catalyses the reaction N(6)-[(R)-dihydrolipoyl]-L-lysyl-[protein] + NAD(+) = N(6)-[(R)-lipoyl]-L-lysyl-[protein] + NADH + H(+). Functionally, lipoamide dehydrogenase is a component of the glycine cleavage system as well as an E3 component of three alpha-ketoacid dehydrogenase complexes (pyruvate-, alpha-ketoglutarate-, and branched-chain amino acid-dehydrogenase complex). The 2-oxoglutarate dehydrogenase complex is mainly active in the mitochondrion. A fraction of the 2-oxoglutarate dehydrogenase complex also localizes in the nucleus and is required for lysine succinylation of histones: associates with KAT2A on chromatin and provides succinyl-CoA to histone succinyltransferase KAT2A. In monomeric form may have additional moonlighting function as serine protease. Involved in the hyperactivation of spermatazoa during capacitation and in the spermatazoal acrosome reaction. The sequence is that of Dihydrolipoyl dehydrogenase, mitochondrial (DLD) from Mesocricetus auratus (Golden hamster).